We begin with the raw amino-acid sequence, 329 residues long: Glycerol-3-phosphate dehydrogenase [NAD(P)+] (329 aa).

Positions 11, 30, and 103 each coordinate NADPH. Residues Lys103, Gly132, and Ser134 each contribute to the sn-glycerol 3-phosphate site. Residue Ala136 participates in NADPH binding. Residues Lys187, Asp240, Ser250, Arg251, and Asn252 each coordinate sn-glycerol 3-phosphate. The Proton acceptor role is filled by Lys187. NADPH is bound at residue Arg251. Positions 275 and 277 each coordinate NADPH.

The protein belongs to the NAD-dependent glycerol-3-phosphate dehydrogenase family.

Its subcellular location is the cytoplasm. It carries out the reaction sn-glycerol 3-phosphate + NAD(+) = dihydroxyacetone phosphate + NADH + H(+). The catalysed reaction is sn-glycerol 3-phosphate + NADP(+) = dihydroxyacetone phosphate + NADPH + H(+). It participates in membrane lipid metabolism; glycerophospholipid metabolism. Its function is as follows. Catalyzes the reduction of the glycolytic intermediate dihydroxyacetone phosphate (DHAP) to sn-glycerol 3-phosphate (G3P), the key precursor for phospholipid synthesis. The polypeptide is Glycerol-3-phosphate dehydrogenase [NAD(P)+] (Nitrosomonas europaea (strain ATCC 19718 / CIP 103999 / KCTC 2705 / NBRC 14298)).